Consider the following 303-residue polypeptide: Heme A synthase (303 aa).

Topologically, residues 1–8 are cytoplasmic; that stretch reads MFGKKNLK. Residues 9 to 29 traverse the membrane as a helical segment; the sequence is WLGVVATLMMTFVQLGGALVT. At 30–67 the chain is on the extracellular side; sequence KTGSADGCGSSWPLCHGALIPEFFPIDTIIELSHRAVS. The cysteines at positions 37 and 44 are disulfide-linked. Glutamate 60 is an active-site residue. Residue histidine 63 coordinates heme o. Residues 68–88 form a helical membrane-spanning segment; the sequence is ALSLLMVLWLVITAWKHIGYI. The Cytoplasmic segment spans residues 89–93; that stretch reads KEIKP. Residues 94-114 form a helical membrane-spanning segment; sequence LSIISVGFLLLQALIGAAAVI. The Extracellular portion of the chain corresponds to 115–125; that stretch reads WQQNDYVLALH. Heme o is bound at residue histidine 125. A helical membrane pass occupies residues 126–146; the sequence is FGISLISFSSVFLITLIIFSI. Over 147–163 the chain is Cytoplasmic; it reads DQKYEADELYIKKPLRR. A helical membrane pass occupies residues 164–184; it reads LTWLMAIIIYCGVYTGALVRH. Topologically, residues 185-215 are extracellular; the sequence is ADASLAYGGWPLPFHDLVPHSEQDWVQLTHR. Histidine 214 contacts heme b. Residues 216–236 traverse the membrane as a helical segment; sequence IMAFIVFTIIMITYIHAVKNY. Over 237–244 the chain is Cytoplasmic; sequence PNNRTVHY. A helical transmembrane segment spans residues 245–265; the sequence is GYTAAFILVILQVITGALSIM. The Extracellular segment spans residues 266-270; the sequence is TNVNL. Residues 271–291 form a helical membrane-spanning segment; it reads IIALFHALFITYLFGMTTYFI. Histidine 276 provides a ligand contact to heme b. Residues 292 to 303 are Cytoplasmic-facing; sequence MLMLRSVRSDKQ.

It belongs to the COX15/CtaA family. Type 1 subfamily. In terms of assembly, interacts with CtaB. Heme b is required as a cofactor.

Its subcellular location is the cell membrane. The catalysed reaction is Fe(II)-heme o + 2 A + H2O = Fe(II)-heme a + 2 AH2. It participates in porphyrin-containing compound metabolism; heme A biosynthesis; heme A from heme O: step 1/1. Its function is as follows. Catalyzes the conversion of heme O to heme A by two successive hydroxylations of the methyl group at C8. The first hydroxylation forms heme I, the second hydroxylation results in an unstable dihydroxymethyl group, which spontaneously dehydrates, resulting in the formyl group of heme A. The polypeptide is Heme A synthase (Staphylococcus aureus (strain Mu3 / ATCC 700698)).